Here is an 84-residue protein sequence, read N- to C-terminus: RNA-binding protein SAHV_0542 (84 aa).

The protein belongs to the eukaryotic ribosomal protein eL8 family.

The chain is RNA-binding protein SAHV_0542 from Staphylococcus aureus (strain Mu3 / ATCC 700698).